A 361-amino-acid polypeptide reads, in one-letter code: Phospho-N-acetylmuramoyl-pentapeptide-transferase (361 aa).

The next 10 membrane-spanning stretches (helical) occupy residues 17 to 37 (SIYL…LFAG), 66 to 86 (GTPT…SIFI), 90 to 110 (TNSL…IGFI), 129 to 149 (LLFQ…IGLT), 162 to 182 (ISAY…QIVL), 197 to 217 (GLAI…AYFT), 232 to 252 (VGSG…LGFL), 261 to 281 (IFMG…IAII), 286 to 306 (LMLP…ILQV), and 340 to 360 (FWIG…MRGI).

It belongs to the glycosyltransferase 4 family. MraY subfamily. Requires Mg(2+) as cofactor.

It is found in the cell inner membrane. It carries out the reaction UDP-N-acetyl-alpha-D-muramoyl-L-alanyl-gamma-D-glutamyl-meso-2,6-diaminopimeloyl-D-alanyl-D-alanine + di-trans,octa-cis-undecaprenyl phosphate = di-trans,octa-cis-undecaprenyl diphospho-N-acetyl-alpha-D-muramoyl-L-alanyl-D-glutamyl-meso-2,6-diaminopimeloyl-D-alanyl-D-alanine + UMP. It participates in cell wall biogenesis; peptidoglycan biosynthesis. Catalyzes the initial step of the lipid cycle reactions in the biosynthesis of the cell wall peptidoglycan: transfers peptidoglycan precursor phospho-MurNAc-pentapeptide from UDP-MurNAc-pentapeptide onto the lipid carrier undecaprenyl phosphate, yielding undecaprenyl-pyrophosphoryl-MurNAc-pentapeptide, known as lipid I. This is Phospho-N-acetylmuramoyl-pentapeptide-transferase from Fusobacterium nucleatum subsp. nucleatum (strain ATCC 25586 / DSM 15643 / BCRC 10681 / CIP 101130 / JCM 8532 / KCTC 2640 / LMG 13131 / VPI 4355).